We begin with the raw amino-acid sequence, 170 residues long: 6,7-dimethyl-8-ribityllumazine synthase (170 aa).

Residues W25, 57 to 59 (AVE), and 79 to 81 (AVI) each bind 5-amino-6-(D-ribitylamino)uracil. 84–85 (DT) lines the (2S)-2-hydroxy-3-oxobutyl phosphate pocket. H87 functions as the Proton donor in the catalytic mechanism. N112 provides a ligand contact to 5-amino-6-(D-ribitylamino)uracil. A (2S)-2-hydroxy-3-oxobutyl phosphate-binding site is contributed by R126.

Belongs to the DMRL synthase family.

It carries out the reaction (2S)-2-hydroxy-3-oxobutyl phosphate + 5-amino-6-(D-ribitylamino)uracil = 6,7-dimethyl-8-(1-D-ribityl)lumazine + phosphate + 2 H2O + H(+). It functions in the pathway cofactor biosynthesis; riboflavin biosynthesis; riboflavin from 2-hydroxy-3-oxobutyl phosphate and 5-amino-6-(D-ribitylamino)uracil: step 1/2. In terms of biological role, catalyzes the formation of 6,7-dimethyl-8-ribityllumazine by condensation of 5-amino-6-(D-ribitylamino)uracil with 3,4-dihydroxy-2-butanone 4-phosphate. This is the penultimate step in the biosynthesis of riboflavin. The chain is 6,7-dimethyl-8-ribityllumazine synthase from Thermobifida fusca (strain YX).